Here is a 301-residue protein sequence, read N- to C-terminus: Elongation factor Ts (301 aa).

Residues 82-85 (TDFV) form an involved in Mg(2+) ion dislocation from EF-Tu region.

It belongs to the EF-Ts family.

The protein resides in the cytoplasm. In terms of biological role, associates with the EF-Tu.GDP complex and induces the exchange of GDP to GTP. It remains bound to the aminoacyl-tRNA.EF-Tu.GTP complex up to the GTP hydrolysis stage on the ribosome. In Hyphomonas neptunium (strain ATCC 15444), this protein is Elongation factor Ts.